The sequence spans 189 residues: Inner membrane-spanning protein YciB (189 aa).

Transmembrane regions (helical) follow at residues 23 to 43 (ILLA…FVWW), 54 to 74 (ITLA…DAAF), 82 to 102 (VNWL…KTLI), 120 to 140 (LNLA…YVFK), and 150 to 170 (FKLF…GVYL).

The protein belongs to the YciB family.

The protein localises to the cell inner membrane. In terms of biological role, plays a role in cell envelope biogenesis, maintenance of cell envelope integrity and membrane homeostasis. This Chromohalobacter salexigens (strain ATCC BAA-138 / DSM 3043 / CIP 106854 / NCIMB 13768 / 1H11) protein is Inner membrane-spanning protein YciB.